Here is a 54-residue protein sequence, read N- to C-terminus: U7-myrmicitoxin-Tb1a (54 aa).

The first 26 residues, 1 to 26 (MQLSHLLLAFAMIFVMTIIHTPQVQA), serve as a signal peptide directing secretion. Residues 27–36 (DAMADADADA) constitute a propeptide that is removed on maturation. Residues Cys-40 and Cys-49 are joined by a disulfide bond.

Expressed by the venom gland.

It localises to the secreted. Venom protein with unknown function. Does not induce paralysis when a high dose is administered by intrathoracic injection into the blowfly Lucilia caesar. The protein is U7-myrmicitoxin-Tb1a of Tetramorium bicarinatum (Tramp ant).